We begin with the raw amino-acid sequence, 341 residues long: Alpha-1,4-N-acetylglucosaminyltransferase (341 aa).

Residues 1–4 (MLKE) lie on the Cytoplasmic side of the membrane. A helical; Signal-anchor for type II membrane protein membrane pass occupies residues 5–25 (IYLSLSLVLVFACGLLYQLTM). The Lumenal portion of the chain corresponds to 26 to 341 (RSQCFFACLP…VSKKPGTGSR (316 aa)). Asparagine 100 carries an N-linked (GlcNAc...) asparagine glycan. The DXD motif motif lies at 168–170 (DTD).

Belongs to the glycosyltransferase 32 family.

The protein resides in the golgi apparatus membrane. Its pathway is protein modification; protein glycosylation. In terms of biological role, catalyzes the transfer of N-acetylglucosamine (GlcNAc) to core 2 branched O-glycans. Necessary for the synthesis of type III mucin which is specifically produced in the stomach, duodenum, and pancreatic duct. May protect against inflammation-associated gastric adenocarcinoma. The sequence is that of Alpha-1,4-N-acetylglucosaminyltransferase from Mus musculus (Mouse).